A 722-amino-acid chain; its full sequence is Transcription factor kayak, isoforms D/sro (722 aa).

A compositionally biased stretch (low complexity) spans 173–188 (QHQTQQQHQSQQQQQH). 3 disordered regions span residues 173–193 (QHQT…RQDY), 283–317 (LGQG…HTDS), and 350–407 (GSAS…KRRV). Polar residues predominate over residues 283-300 (LGQGSESEDSNASYNDTQ). 2 stretches are compositionally biased toward low complexity: residues 308 to 317 (TDTSSAHTDS) and 350 to 364 (GSAS…TSNT). The bZIP domain occupies 385-448 (EQKRAVRRER…NQLEYLLATH (64 aa)). The tract at residues 387 to 406 (KRAVRRERNKQAAARCRKRR) is basic motif. A leucine-zipper region spans residues 413–420 (LTEEVEQL). The span at 477–498 (AGSSGSGASSHHNHNSNDSSNG) shows a compositional bias: low complexity. Disordered stretches follow at residues 477–519 (AGSS…PLDL) and 683–722 (DGGT…LVSL). Polar residues predominate over residues 506-516 (TLNSTGRSNSP). A Phosphoserine modification is found at S515.

This sequence belongs to the bZIP family. Fos subfamily. As to quaternary structure, homodimer. Heterodimer with Jra. The kay-Jra heterodimer binds more stably to the AP-1 site than either of the two proteins alone.

It is found in the nucleus. In terms of biological role, developmentally regulated transcription factor AP-1 binds and recognizes the enhancer DNA sequence: 5'-TGA[CG]TCA-3'. May play a role in the function or determination of a particular subset of cells in the developing embryo. It is able to carry out its function either independently of or in conjunction with Jra. This is Transcription factor kayak, isoforms D/sro from Drosophila melanogaster (Fruit fly).